A 177-amino-acid polypeptide reads, in one-letter code: Nucleoside triphosphate/diphosphate phosphatase (177 aa).

The active-site Proton donor is the Arg23. Residues Asn87, Asp103, Asp105, Asp107, Asp120, and Glu123 each contribute to the Mg(2+) site.

It belongs to the Ntdp family. Mg(2+) is required as a cofactor.

It catalyses the reaction a ribonucleoside 5'-triphosphate + H2O = a ribonucleoside 5'-diphosphate + phosphate + H(+). It carries out the reaction a ribonucleoside 5'-diphosphate + H2O = a ribonucleoside 5'-phosphate + phosphate + H(+). Has nucleoside phosphatase activity towards nucleoside triphosphates and nucleoside diphosphates. In Streptococcus mutans serotype c (strain ATCC 700610 / UA159), this protein is Nucleoside triphosphate/diphosphate phosphatase.